The chain runs to 304 residues: Oxygen-dependent coproporphyrinogen-III oxidase (304 aa).

Ser94 provides a ligand contact to substrate. The a divalent metal cation site is built by His98 and His108. Residue His108 is the Proton donor of the active site. Position 110 to 112 (110 to 112 (NVR)) interacts with substrate. The a divalent metal cation site is built by His147 and His177. The important for dimerization stretch occupies residues 242–277 (YVEFNLVYDRGTLFGLQSGGRTESILMSLPPVAHWR). Substrate is bound at residue 260–262 (GGR).

It belongs to the aerobic coproporphyrinogen-III oxidase family. As to quaternary structure, homodimer. A divalent metal cation serves as cofactor.

The protein resides in the cytoplasm. The catalysed reaction is coproporphyrinogen III + O2 + 2 H(+) = protoporphyrinogen IX + 2 CO2 + 2 H2O. Its pathway is porphyrin-containing compound metabolism; protoporphyrin-IX biosynthesis; protoporphyrinogen-IX from coproporphyrinogen-III (O2 route): step 1/1. Its function is as follows. Involved in the heme biosynthesis. Catalyzes the aerobic oxidative decarboxylation of propionate groups of rings A and B of coproporphyrinogen-III to yield the vinyl groups in protoporphyrinogen-IX. This is Oxygen-dependent coproporphyrinogen-III oxidase from Methylococcus capsulatus (strain ATCC 33009 / NCIMB 11132 / Bath).